Consider the following 482-residue polypeptide: ATP synthase subunit beta (482 aa).

Residue 167-174 (GGAGVGKT) participates in ATP binding.

Belongs to the ATPase alpha/beta chains family. As to quaternary structure, F-type ATPases have 2 components, CF(1) - the catalytic core - and CF(0) - the membrane proton channel. CF(1) has five subunits: alpha(3), beta(3), gamma(1), delta(1), epsilon(1). CF(0) has three main subunits: a(1), b(2) and c(9-12). The alpha and beta chains form an alternating ring which encloses part of the gamma chain. CF(1) is attached to CF(0) by a central stalk formed by the gamma and epsilon chains, while a peripheral stalk is formed by the delta and b chains.

The protein localises to the cell membrane. The enzyme catalyses ATP + H2O + 4 H(+)(in) = ADP + phosphate + 5 H(+)(out). Its function is as follows. Produces ATP from ADP in the presence of a proton gradient across the membrane. The catalytic sites are hosted primarily by the beta subunits. This Corynebacterium aurimucosum (strain ATCC 700975 / DSM 44827 / CIP 107346 / CN-1) (Corynebacterium nigricans) protein is ATP synthase subunit beta.